A 237-amino-acid chain; its full sequence is UPF0174 protein YaaW (237 aa).

It belongs to the UPF0174 family.

In Escherichia coli O157:H7, this protein is UPF0174 protein YaaW.